A 535-amino-acid chain; its full sequence is GMP synthase [glutamine-hydrolyzing] (535 aa).

Residues Lys-24–Asp-217 form the Glutamine amidotransferase type-1 domain. Cys-101 serves as the catalytic Nucleophile. Catalysis depends on residues His-191 and Glu-193. Positions Trp-218–Arg-410 constitute a GMPS ATP-PPase domain. An ATP-binding site is contributed by Ser-245–Ala-251.

As to quaternary structure, homodimer.

The enzyme catalyses XMP + L-glutamine + ATP + H2O = GMP + L-glutamate + AMP + diphosphate + 2 H(+). Its pathway is purine metabolism; GMP biosynthesis; GMP from XMP (L-Gln route): step 1/1. Catalyzes the synthesis of GMP from XMP. The protein is GMP synthase [glutamine-hydrolyzing] of Bradyrhizobium sp. (strain ORS 278).